We begin with the raw amino-acid sequence, 209 residues long: Large ribosomal subunit protein uL3 (209 aa).

The tract at residues 128-152 is disordered; it reads QARGPMSHGSRYHRRPGSMGPVDPN.

It belongs to the universal ribosomal protein uL3 family. In terms of assembly, part of the 50S ribosomal subunit. Forms a cluster with proteins L14 and L19.

Its function is as follows. One of the primary rRNA binding proteins, it binds directly near the 3'-end of the 23S rRNA, where it nucleates assembly of the 50S subunit. This is Large ribosomal subunit protein uL3 from Halalkalibacterium halodurans (strain ATCC BAA-125 / DSM 18197 / FERM 7344 / JCM 9153 / C-125) (Bacillus halodurans).